Here is a 1041-residue protein sequence, read N- to C-terminus: RAS protein activator like-3 (1041 aa).

The disordered stretch occupies residues 1 to 59 (MKPECGQTMFRTFWSRSRDSSAMDPPLQSEEDSQTQPSLPSPLTSYRWHTGGSGEKAAG). The span at 34 to 44 (QTQPSLPSPLT) shows a compositional bias: polar residues. Residues S41, S74, S187, S189, S190, S193, S239, S252, S256, and S259 each carry the phosphoserine modification. Positions 218 to 243 (SNQVHNVRKLLKRLKEKKRAKSELGA) form a coiled coil. Positions 220–321 (QVHNVRKLLK…WIEDLRRQFQ (102 aa)) constitute a PH domain. A disordered region spans residues 234–256 (KKRAKSELGAYTPRDGPPSALGS). T262 is modified (phosphothreonine). Positions 312–430 (WIEDLRRQFQ…APAAGLERWF (119 aa)) constitute a C2 domain. One can recognise a Ras-GAP domain in the interval 500–708 (GRAQALVTDL…PAMQHFLDQV (209 aa)). The tract at residues 790–910 (GEKPGFLAPR…PGDRYQTTGT (121 aa)) is disordered. S813 and S816 each carry phosphoserine. Residues 850–866 (RPTHRRPSAGSKPRPKG) show a composition bias toward basic residues. Residues 931 to 1013 (QKALSLLVES…LRDSLQSLQL (83 aa)) are a coiled coil. Positions 1016–1041 (KTPGSRSQPLPLKAPCVNGADLSMGT) are disordered.

Predominantly expressed in hematopoietic tissues.

It is found in the cytoplasm. The protein resides in the cell cortex. In terms of biological role, functions as a Ras GTPase-activating protein. Plays an important role in the expansion and functions of natural killer T (NKT) cells in the liver by negatively regulating RAS activity and the down-stream ERK signaling pathway. The sequence is that of RAS protein activator like-3 (Rasal3) from Mus musculus (Mouse).